Here is a 122-residue protein sequence, read N- to C-terminus: Large ribosomal subunit protein uL14 (122 aa).

Belongs to the universal ribosomal protein uL14 family. Part of the 50S ribosomal subunit. Forms a cluster with proteins L3 and L19. In the 70S ribosome, L14 and L19 interact and together make contacts with the 16S rRNA in bridges B5 and B8.

In terms of biological role, binds to 23S rRNA. Forms part of two intersubunit bridges in the 70S ribosome. This chain is Large ribosomal subunit protein uL14, found in Polynucleobacter asymbioticus (strain DSM 18221 / CIP 109841 / QLW-P1DMWA-1) (Polynucleobacter necessarius subsp. asymbioticus).